We begin with the raw amino-acid sequence, 325 residues long: 5-dehydro-2-deoxygluconokinase (325 aa).

It belongs to the carbohydrate kinase PfkB family.

The catalysed reaction is 5-dehydro-2-deoxy-D-gluconate + ATP = 6-phospho-5-dehydro-2-deoxy-D-gluconate + ADP + H(+). The protein operates within polyol metabolism; myo-inositol degradation into acetyl-CoA; acetyl-CoA from myo-inositol: step 5/7. Catalyzes the phosphorylation of 5-dehydro-2-deoxy-D-gluconate (2-deoxy-5-keto-D-gluconate or DKG) to 6-phospho-5-dehydro-2-deoxy-D-gluconate (DKGP). The polypeptide is 5-dehydro-2-deoxygluconokinase (Bacillus licheniformis (strain ATCC 14580 / DSM 13 / JCM 2505 / CCUG 7422 / NBRC 12200 / NCIMB 9375 / NCTC 10341 / NRRL NRS-1264 / Gibson 46)).